A 334-amino-acid chain; its full sequence is Kihadalactone A synthase LFS (334 aa).

The Fe2OG dioxygenase domain maps to 181 to 286 (KTASYSNMFH…RYSTGLFLCP (106 aa)). Residues histidine 208, aspartate 210, and histidine 269 each contribute to the Fe cation site. Arginine 277 lines the 2-oxoglutarate pocket.

This sequence belongs to the iron/ascorbate-dependent oxidoreductase family. It depends on Fe(2+) as a cofactor. In terms of tissue distribution, expressed in maturing fruits and in juice vesicles.

It carries out the reaction (1R,2R,3S,8R,10R,11R,15S,16S)-3-(acetyloxy)-15-(1-hydroxy-4-oxobutan-2-yl)-2,7,7,11,16-pentamethyl-5-oxo-6-oxatetracyclo[9.7.0.0(2,8).0(12,16)]octadec-12-en-10-yl acetate + 2-oxoglutarate + O2 = kihadalactone A + succinate + CO2 + 2 H2O. It participates in secondary metabolite biosynthesis; terpenoid biosynthesis. 2-oxoglutarate-Fe(II) type oxidoreductase involved in the biosynthesis of limonoids triterpene natural products such as limonin, a compound with insecticidal activity responsible for the bitter taste in citrus. Catalyzes the formation of kihadalactone A. The protein is Kihadalactone A synthase LFS of Citrus sinensis (Sweet orange).